The following is a 129-amino-acid chain: Large ribosomal subunit protein bL21 (129 aa).

It belongs to the bacterial ribosomal protein bL21 family. Part of the 50S ribosomal subunit. Contacts protein L20.

In terms of biological role, this protein binds to 23S rRNA in the presence of protein L20. The protein is Large ribosomal subunit protein bL21 of Prochlorococcus marinus (strain MIT 9313).